The primary structure comprises 122 residues: Flagellar protein FliT (122 aa).

Residues 1 to 50 are required for homodimerization; it reads MERQQQLLAAYQQIHSLSSQMIALAQTERWEDLVELELAYVTAVESTAAF. Residues 60-98 form a fliD binding region; the sequence is LQELLRNKLQQILDNETELKRLLQQRMDQLKELIGQSTR.

Belongs to the FliT family. As to quaternary structure, homodimer. Interacts with FliD and FlhC.

It is found in the cytoplasm. It localises to the cytosol. Functionally, dual-function protein that regulates the transcription of class 2 flagellar operons and that also acts as an export chaperone for the filament-capping protein FliD. As a transcriptional regulator, acts as an anti-FlhDC factor; it directly binds FlhC, thus inhibiting the binding of the FlhC/FlhD complex to class 2 promoters, resulting in decreased expression of class 2 flagellar operons. As a chaperone, effects FliD transition to the membrane by preventing its premature polymerization, and by directing it to the export apparatus. This Serratia proteamaculans (strain 568) protein is Flagellar protein FliT.